We begin with the raw amino-acid sequence, 295 residues long: Phosphoenolpyruvate phosphomutase (295 aa).

The Nucleophile role is filled by D58. Residue D58 coordinates Mg(2+).

The protein belongs to the isocitrate lyase/PEP mutase superfamily. PEP mutase family. As to quaternary structure, homotetramer. Mg(2+) serves as cofactor.

The enzyme catalyses phosphoenolpyruvate + H(+) = 3-phosphonopyruvate. The protein operates within phosphorus metabolism; phosphonate biosynthesis. Its function is as follows. Formation of a carbon-phosphorus bond by converting phosphoenolpyruvate (PEP) to phosphonopyruvate (P-Pyr). The protein is Phosphoenolpyruvate phosphomutase of Mytilus edulis (Blue mussel).